The following is a 133-amino-acid chain: Ycf54-like protein (133 aa).

It belongs to the ycf54 family.

In Synechocystis sp. (strain ATCC 27184 / PCC 6803 / Kazusa), this protein is Ycf54-like protein.